We begin with the raw amino-acid sequence, 145 residues long: Large ribosomal subunit protein uL16 (145 aa).

The segment covering 1-17 (MLMPKRVKHRRVHRGRM) has biased composition (basic residues). Residues 1–22 (MLMPKRVKHRRVHRGRMTGKAT) form a disordered region.

It belongs to the universal ribosomal protein uL16 family. Part of the 50S ribosomal subunit.

Binds 23S rRNA and is also seen to make contacts with the A and possibly P site tRNAs. The sequence is that of Large ribosomal subunit protein uL16 from Ruminiclostridium cellulolyticum (strain ATCC 35319 / DSM 5812 / JCM 6584 / H10) (Clostridium cellulolyticum).